Consider the following 244-residue polypeptide: MKKAGFLFLAAMAIIVVSLNAKDPNVLRKIVFEKCLPNYEKNQNPSPCIEVKPDAGYVVLKDINGPLQYLLMPTTHISGIENPLLLDPSTPNFFYLSWQARDFMSKKYGKPIPDYAISLTINSKKGRSQNHFHIHISCISLDVRKQLDNNLKNINSRWSPLSGGLNGHKYLARRVTESELAQKSPFVMLAKEVPNAHKRMGDYGLAVVQQSDNSFVLLATQFNPLTLNRASAEEIQDHECAILR.

A helical membrane pass occupies residues leucine 7–aspartate 23.

This sequence belongs to the Cdh family.

It localises to the cell inner membrane. The enzyme catalyses a CDP-1,2-diacyl-sn-glycerol + H2O = a 1,2-diacyl-sn-glycero-3-phosphate + CMP + 2 H(+). The protein operates within phospholipid metabolism; CDP-diacylglycerol degradation; phosphatidate from CDP-diacylglycerol: step 1/1. This chain is CDP-diacylglycerol pyrophosphatase (cdh), found in Helicobacter pylori (strain J99 / ATCC 700824) (Campylobacter pylori J99).